The sequence spans 213 residues: RNA polymerase I subunit H (213 aa).

Residues 1-19 show a composition bias toward basic and acidic residues; it reads MVERMKKDTGDETKTKVQE. The disordered stretch occupies residues 1-70; sequence MVERMKKDTG…AREFTDKPWR (70 aa). A compositionally biased stretch (pro residues) spans 21–31; sequence PPSPSPPPPPP. 2 stretches are compositionally biased toward basic and acidic residues: residues 43-53 and 60-69; these read VPEREKKQIER and HAREFTDKPW.

As to expression, expressed during spermatogenesis, initially at pachytene stage with abundance increasing in round spermatids and decreasing again during spermatid elongation.

In terms of biological role, may be involved in male sterility. The protein is RNA polymerase I subunit H of Mus musculus (Mouse).